Here is a 235-residue protein sequence, read N- to C-terminus: 15,16-dihydrobiliverdin:ferredoxin oxidoreductase (235 aa).

It belongs to the HY2 family.

It catalyses the reaction 15,16-dihydrobiliverdin + oxidized 2[4Fe-4S]-[ferredoxin] = biliverdin IXalpha + reduced 2[4Fe-4S]-[ferredoxin] + 2 H(+). In terms of biological role, catalyzes the two-electron reduction of biliverdin IX-alpha at the C15 methine bridge. This is 15,16-dihydrobiliverdin:ferredoxin oxidoreductase from Synechococcus sp. (strain CC9605).